Reading from the N-terminus, the 544-residue chain is Flagellar hook-associated protein 1 (544 aa).

This sequence belongs to the flagella basal body rod proteins family.

It localises to the secreted. The protein resides in the bacterial flagellum. The protein is Flagellar hook-associated protein 1 (flgK) of Buchnera aphidicola subsp. Schizaphis graminum (strain Sg).